We begin with the raw amino-acid sequence, 460 residues long: MISINLIKLTSITNGILYCSNYATLHSISIHSITTDTRKITPKCLFIALIGKNFDAHMFVNEAISKGAAALLLEKQCYPKNVIPQIIVQNTTIALGKIASWIRDQTNATVIAITGSSGKTSVKEMTSSILKNCGNTISTFQNLNNNIGVPLTLLNLNKSHKYAILELGANYPKDIEYTTKITKPNIALINNIYHSHLAGFKSLFGVAQAKQEIFLGLRKNGIAIYNKDSNYWSKWKKNLLTQKIINFSIKKNSTIFASNITTSNQGSKFKIHSPNGEIYVTLPLLGYHNISNALAAATIAISINIPLEIIKIGLSSLPILKNRLQIIRLNKYKTIINDTYNANTASMIVAIKILENISGYKLFVAGDMLELGKNDVLYHKIIGNTIYNSNINEVFSIGKLSKEISIASKKGHHFYNSDELLKNLKNKLLNKKIITILVKASRSEKLDVIVEQLIKEYHKA.

Residue 115-121 coordinates ATP; the sequence is GSSGKTS.

This sequence belongs to the MurCDEF family. MurF subfamily.

It is found in the cytoplasm. The enzyme catalyses D-alanyl-D-alanine + UDP-N-acetyl-alpha-D-muramoyl-L-alanyl-gamma-D-glutamyl-meso-2,6-diaminopimelate + ATP = UDP-N-acetyl-alpha-D-muramoyl-L-alanyl-gamma-D-glutamyl-meso-2,6-diaminopimeloyl-D-alanyl-D-alanine + ADP + phosphate + H(+). It functions in the pathway cell wall biogenesis; peptidoglycan biosynthesis. Involved in cell wall formation. Catalyzes the final step in the synthesis of UDP-N-acetylmuramoyl-pentapeptide, the precursor of murein. The sequence is that of UDP-N-acetylmuramoyl-tripeptide--D-alanyl-D-alanine ligase from Buchnera aphidicola subsp. Baizongia pistaciae (strain Bp).